We begin with the raw amino-acid sequence, 31 residues long: Cytochrome b6-f complex subunit 6 (31 aa).

Residues 3–23 (ILINYFLLVGFCFALASGLFL) form a helical membrane-spanning segment.

Belongs to the PetL family. In terms of assembly, the 4 large subunits of the cytochrome b6-f complex are cytochrome b6, subunit IV (17 kDa polypeptide, PetD), cytochrome f and the Rieske protein, while the 4 small subunits are PetG, PetL, PetM and PetN. The complex functions as a dimer.

The protein localises to the plastid. It is found in the chloroplast thylakoid membrane. Functionally, component of the cytochrome b6-f complex, which mediates electron transfer between photosystem II (PSII) and photosystem I (PSI), cyclic electron flow around PSI, and state transitions. PetL is important for photoautotrophic growth as well as for electron transfer efficiency and stability of the cytochrome b6-f complex. The chain is Cytochrome b6-f complex subunit 6 from Thalassiosira pseudonana (Marine diatom).